The sequence spans 172 residues: Small ribosomal subunit protein uS5 (172 aa).

The S5 DRBM domain occupies 17–80 (LREKMISVNR…DEARRKMVKV (64 aa)).

Belongs to the universal ribosomal protein uS5 family. As to quaternary structure, part of the 30S ribosomal subunit. Contacts proteins S4 and S8.

Its function is as follows. With S4 and S12 plays an important role in translational accuracy. Functionally, located at the back of the 30S subunit body where it stabilizes the conformation of the head with respect to the body. This Cupriavidus metallidurans (strain ATCC 43123 / DSM 2839 / NBRC 102507 / CH34) (Ralstonia metallidurans) protein is Small ribosomal subunit protein uS5.